The chain runs to 145 residues: Cytochrome b (145 aa).

A helical membrane pass occupies residues phenylalanine 38–isoleucine 58. Residues histidine 42 and histidine 56 each contribute to the heme b site. Histidine 61 contributes to the a ubiquinone binding site. A helical membrane pass occupies residues phenylalanine 85–phenylalanine 105.

Belongs to the cytochrome b family. Fungal cytochrome b-c1 complex contains 10 subunits; 3 respiratory subunits, 2 core proteins and 5 low-molecular weight proteins. Cytochrome b-c1 complex is a homodimer. Heme b serves as cofactor.

Its subcellular location is the mitochondrion inner membrane. In terms of biological role, component of the ubiquinol-cytochrome c reductase complex (complex III or cytochrome b-c1 complex) that is part of the mitochondrial respiratory chain. The b-c1 complex mediates electron transfer from ubiquinol to cytochrome c. Contributes to the generation of a proton gradient across the mitochondrial membrane that is then used for ATP synthesis. This Aspergillus flavus protein is Cytochrome b (cob).